A 408-amino-acid chain; its full sequence is S-adenosylmethionine:tRNA ribosyltransferase-isomerase (408 aa).

This sequence belongs to the QueA family. Monomer.

The protein resides in the cytoplasm. It carries out the reaction 7-aminomethyl-7-carbaguanosine(34) in tRNA + S-adenosyl-L-methionine = epoxyqueuosine(34) in tRNA + adenine + L-methionine + 2 H(+). Its pathway is tRNA modification; tRNA-queuosine biosynthesis. In terms of biological role, transfers and isomerizes the ribose moiety from AdoMet to the 7-aminomethyl group of 7-deazaguanine (preQ1-tRNA) to give epoxyqueuosine (oQ-tRNA). This Trichormus variabilis (strain ATCC 29413 / PCC 7937) (Anabaena variabilis) protein is S-adenosylmethionine:tRNA ribosyltransferase-isomerase.